Consider the following 96-residue polypeptide: Small ribosomal subunit protein bS6 (96 aa).

The protein belongs to the bacterial ribosomal protein bS6 family.

In terms of biological role, binds together with bS18 to 16S ribosomal RNA. This Synechococcus sp. (strain JA-2-3B'a(2-13)) (Cyanobacteria bacterium Yellowstone B-Prime) protein is Small ribosomal subunit protein bS6.